A 729-amino-acid chain; its full sequence is Fatty acid oxidation complex subunit alpha (729 aa).

Residues 1–189 (MLYKGDTLYL…KIGLVDGVVK (189 aa)) are enoyl-CoA hydratase/isomerase. Position 296 (Asp-296) interacts with substrate. Residues 311–729 (ETPKQAAVLG…ARPVGDLKTA (419 aa)) form a 3-hydroxyacyl-CoA dehydrogenase region. Residues Met-324, Asp-343, 400–402 (VVE), Lys-407, and Ser-429 each bind NAD(+). The active-site For 3-hydroxyacyl-CoA dehydrogenase activity is His-450. NAD(+) is bound at residue Asn-453. The substrate site is built by Asn-500 and Tyr-660. Positions 707 to 729 (ARHNEPYYPPVEPARPVGDLKTA) are disordered.

This sequence in the N-terminal section; belongs to the enoyl-CoA hydratase/isomerase family. In the C-terminal section; belongs to the 3-hydroxyacyl-CoA dehydrogenase family. Heterotetramer of two alpha chains (FadB) and two beta chains (FadA).

The catalysed reaction is a (3S)-3-hydroxyacyl-CoA + NAD(+) = a 3-oxoacyl-CoA + NADH + H(+). It carries out the reaction a (3S)-3-hydroxyacyl-CoA = a (2E)-enoyl-CoA + H2O. The enzyme catalyses a 4-saturated-(3S)-3-hydroxyacyl-CoA = a (3E)-enoyl-CoA + H2O. It catalyses the reaction (3S)-3-hydroxybutanoyl-CoA = (3R)-3-hydroxybutanoyl-CoA. The catalysed reaction is a (3Z)-enoyl-CoA = a 4-saturated (2E)-enoyl-CoA. It carries out the reaction a (3E)-enoyl-CoA = a 4-saturated (2E)-enoyl-CoA. The protein operates within lipid metabolism; fatty acid beta-oxidation. Its function is as follows. Involved in the aerobic and anaerobic degradation of long-chain fatty acids via beta-oxidation cycle. Catalyzes the formation of 3-oxoacyl-CoA from enoyl-CoA via L-3-hydroxyacyl-CoA. It can also use D-3-hydroxyacyl-CoA and cis-3-enoyl-CoA as substrate. The polypeptide is Fatty acid oxidation complex subunit alpha (Escherichia coli O6:K15:H31 (strain 536 / UPEC)).